Here is a 328-residue protein sequence, read N- to C-terminus: PLASTID TRANSCRIPTIONALLY ACTIVE protein 6, chloroplastic (328 aa).

The segment covering 1-14 (MASSAASPSLSLLS) has biased composition (low complexity). Residues 1 to 21 (MASSAASPSLSLLSFTSKPPY) form a disordered region. The N-terminal 59 residues, 1 to 59 (MASSAASPSLSLLSFTSKPPYPSGSQRLFASFRTDGLFAPLTLKSRRGRGIVVKVDDVD), are a transit peptide targeting the chloroplast. The Nuclear localization signal signature appears at 267–275 (RKRDRKDDL). Positions 301-319 (EREEWTKTREDMEKHLRKL) match the RNA binding domain motif.

Subunit of the plastid-encoded RNA polymerase (PEP) complex. Component of a large nuclear subcomplex that may include other PEP subunits (e.g. PTAC12/HMR/PAP5, PTAC14/PAP7 and PTAC7/PAP12). Binds directly to PTAC12/HMR/PAP5 in the nucleus. Interacts with MTERF5. Mostly expressed in rosette leaves, stems and flowers, and, to a lower extent, in roots and cauline leaves.

The protein localises to the plastid. Its subcellular location is the chloroplast. It is found in the chloroplast thylakoid. It localises to the nucleus. The protein resides in the nucleoplasm. In terms of biological role, essential protein involved in plastid gene expression and in chloroplast biogenesis. Links photomorphogenesis and chloroplast biogenesis through its dual localization; required for the formation of late photobodies in the nucleus, as well as for phytochrome B-mediated signaling cascade and subsequent reshaping of the plastid-encoded RNA polymerase (PEP) activity. Binds RNA via specific recognition motifs of viral origin. Recruited by MTERF5 to the transcriptionally paused region of psbEFLJ. Promotes leaf greening. This chain is PLASTID TRANSCRIPTIONALLY ACTIVE protein 6, chloroplastic, found in Arabidopsis thaliana (Mouse-ear cress).